The sequence spans 114 residues: T cell receptor beta variable 5-4 (114 aa).

Positions 1 to 21 (MGPGLLCWALLCLLGAGSVET) are cleaved as a signal peptide. One can recognise an Ig-like domain in the interval 22–114 (GVTQSPTHLI…SALYLCASSL (93 aa)). The cysteines at positions 42 and 110 are disulfide-linked. N-linked (GlcNAc...) asparagine glycosylation is present at Asn-90.

Alpha-beta TR is a heterodimer composed of an alpha and beta chain; disulfide-linked. The alpha-beta TR is associated with the transmembrane signaling CD3 coreceptor proteins to form the TR-CD3 (TcR or TCR). The assembly of alpha-beta TR heterodimers with CD3 occurs in the endoplasmic reticulum where a single alpha-beta TR heterodimer associates with one CD3D-CD3E heterodimer, one CD3G-CD3E heterodimer and one CD247 homodimer forming a stable octameric structure. CD3D-CD3E and CD3G-CD3E heterodimers preferentially associate with TR alpha and TR beta chains, respectively. The association of the CD247 homodimer is the last step of TcR assembly in the endoplasmic reticulum and is required for transport to the cell surface.

The protein localises to the cell membrane. Its function is as follows. V region of the variable domain of T cell receptor (TR) beta chain that participates in the antigen recognition. Alpha-beta T cell receptors are antigen specific receptors which are essential to the immune response and are present on the cell surface of T lymphocytes. Recognize peptide-major histocompatibility (MH) (pMH) complexes that are displayed by antigen presenting cells (APC), a prerequisite for efficient T cell adaptive immunity against pathogens. Binding of alpha-beta TR to pMH complex initiates TR-CD3 clustering on the cell surface and intracellular activation of LCK that phosphorylates the ITAM motifs of CD3G, CD3D, CD3E and CD247 enabling the recruitment of ZAP70. In turn ZAP70 phosphorylates LAT, which recruits numerous signaling molecules to form the LAT signalosome. The LAT signalosome propagates signal branching to three major signaling pathways, the calcium, the mitogen-activated protein kinase (MAPK) kinase and the nuclear factor NF-kappa-B (NF-kB) pathways, leading to the mobilization of transcription factors that are critical for gene expression and essential for T cell growth and differentiation. The T cell repertoire is generated in the thymus, by V-(D)-J rearrangement. This repertoire is then shaped by intrathymic selection events to generate a peripheral T cell pool of self-MH restricted, non-autoaggressive T cells. Post-thymic interaction of alpha-beta TR with the pMH complexes shapes TR structural and functional avidity. In Homo sapiens (Human), this protein is T cell receptor beta variable 5-4.